A 371-amino-acid chain; its full sequence is Peptide chain release factor 2 (371 aa).

N5-methylglutamine is present on Gln253.

The protein belongs to the prokaryotic/mitochondrial release factor family. Methylated by PrmC. Methylation increases the termination efficiency of RF2.

The protein resides in the cytoplasm. Functionally, peptide chain release factor 2 directs the termination of translation in response to the peptide chain termination codons UGA and UAA. This Mycobacterium sp. (strain JLS) protein is Peptide chain release factor 2.